The primary structure comprises 257 residues: UPF0246 protein YaaA (257 aa).

The protein belongs to the UPF0246 family.

This chain is UPF0246 protein YaaA, found in Salmonella typhi.